The following is a 279-amino-acid chain: Tryptophan synthase alpha chain (279 aa).

Residues Glu50 and Asp61 each act as proton acceptor in the active site.

Belongs to the TrpA family. In terms of assembly, tetramer of two alpha and two beta chains.

It carries out the reaction (1S,2R)-1-C-(indol-3-yl)glycerol 3-phosphate + L-serine = D-glyceraldehyde 3-phosphate + L-tryptophan + H2O. It functions in the pathway amino-acid biosynthesis; L-tryptophan biosynthesis; L-tryptophan from chorismate: step 5/5. Its function is as follows. The alpha subunit is responsible for the aldol cleavage of indoleglycerol phosphate to indole and glyceraldehyde 3-phosphate. The protein is Tryptophan synthase alpha chain of Mesorhizobium japonicum (strain LMG 29417 / CECT 9101 / MAFF 303099) (Mesorhizobium loti (strain MAFF 303099)).